A 288-amino-acid chain; its full sequence is MSQISAADVKNLRDITGAGMMDCKKALDETGGDMQQAIDFLRKKGAALAAKRADREAHEGMIQVKLANDCKRGVLLELNCETDFVARGNDFTSFTAALSELALSQCVASAEAMLPLALGAAYDGETVDSAMKTMTGKLGEKINLKRLAFFDMPDGVVEGYIHPGAKLGAIVSLKTDKPELVGELAKDLAMQIAAAAPIVVDRSGVPADYIAKEAEIYRQQALEQGKKEEFVDKIVTGRLEKYYQDVVLTEQVFIKDDKLKVSAMLDQFRKKNQATLDVVGFVRYQLGE.

Residues 82–85 (TDFV) form an involved in Mg(2+) ion dislocation from EF-Tu region.

This sequence belongs to the EF-Ts family.

The protein resides in the cytoplasm. Its function is as follows. Associates with the EF-Tu.GDP complex and induces the exchange of GDP to GTP. It remains bound to the aminoacyl-tRNA.EF-Tu.GTP complex up to the GTP hydrolysis stage on the ribosome. This is Elongation factor Ts from Chlorobium chlorochromatii (strain CaD3).